We begin with the raw amino-acid sequence, 140 residues long: MEPCAALPRALLLLLFLHLSPLGGRPHPLGGRSPASEASEASEASGLWAVQELLGRLKDAVSELQAEQLALEPLHRSHSPAEAPEAGGTPRGVLAPHDSVLQALRRLRSPKMMHKSGCFGRRLDRIGSLSGLGCNVLRKY.

An N-terminal signal peptide occupies residues 1–26; the sequence is MEPCAALPRALLLLLFLHLSPLGGRP. The disordered stretch occupies residues 71-94; it reads LEPLHRSHSPAEAPEAGGTPRGVL. Cys-118 and Cys-134 are disulfide-bonded.

This sequence belongs to the natriuretic peptide family. The precursor molecule is proteolytically cleaved by the endoproteases FURIN or CORIN at Arg-108 to produce the brain natriuretic peptide 32. CORIN also cleaves the precursor molecule at additional residues including Arg-105, Arg-108 and possibly Lys-111. Post-translationally, undergoes further proteolytic cleavage by various proteases such as DPP4, MME and possibly FAP, to give rise to a variety of shorter peptides. Cleaved at Pro-110 by the prolyl endopeptidase FAP (seprase) activity (in vitro). Degraded by IDE. During IDE degradation, the resulting products initially increase the activation of NPR1 and can also stimulate NPR2 to produce cGMP before the fragments are completely degraded and inactivated by IDE (in vitro). Brain and also in atria, but at much lower levels than ANP.

The protein resides in the secreted. Its function is as follows. Cardiac hormone that plays a key role in mediating cardio-renal homeostasis. May also function as a paracrine antifibrotic factor in the heart. Acts by specifically binding and stimulating NPR1 to produce cGMP, which in turn activates effector proteins that drive various biological responses. Involved in regulating the extracellular fluid volume and maintaining the fluid-electrolyte balance through natriuresis, diuresis, vasorelaxation, and inhibition of renin and aldosterone secretion. Binds the clearance receptor NPR3. May affect cardio-renal homeostasis. Able to promote the production of cGMP although its potency is very low compared to brain natriuretic peptide 32. In Canis lupus familiaris (Dog), this protein is Natriuretic peptides B (NPPB).